The following is a 189-amino-acid chain: MKTGKELKPGTVLRIDNDPWLVQKAEFTKSGRNSAIMKTKLKNLLTGYKTETVYGADDKLDDVILDRKEATLSFISGDSYTFMDTTDYTMYELNAEDIDAVLPYIEEGMEDICEAVFFEGRLVSVELPTTISRQVTYTENAARGDTSGKVMKPAKLKNGTEIQVADFIQIDEWIDIDTRDNSFKGRSKK.

The protein belongs to the elongation factor P family.

The protein resides in the cytoplasm. It participates in protein biosynthesis; polypeptide chain elongation. Functionally, involved in peptide bond synthesis. Stimulates efficient translation and peptide-bond synthesis on native or reconstituted 70S ribosomes in vitro. Probably functions indirectly by altering the affinity of the ribosome for aminoacyl-tRNA, thus increasing their reactivity as acceptors for peptidyl transferase. This Pseudomonas entomophila (strain L48) protein is Elongation factor P.